We begin with the raw amino-acid sequence, 572 residues long: Transmembrane glycoprotein NMB (572 aa).

Residues 1 to 22 form the signal peptide; sequence MESLCGVLVFLLLAAGLPLQAA. Over 23–500 the chain is Extracellular; it reads KRFRDVLGHE…DLGSPLRTVN (478 aa). N-linked (GlcNAc...) asparagine glycosylation is found at N93, N134, N200, N249, N275, N296, N300, N306, and N312. Residues 251–338 enclose the PKD domain; sequence SDETFLRDLP…SPSSSTSPSP (88 aa). Residues 321–359 are disordered; sequence GPCPSPTPSPSSSTSPSPASSPSPTLSTPSPSLMPTGHK. Residues 330–356 are compositionally biased toward low complexity; that stretch reads PSSSTSPSPASSPSPTLSTPSPSLMPT. N461 and N469 each carry an N-linked (GlcNAc...) asparagine glycan. Residues 501–521 traverse the membrane as a helical segment; that stretch reads GVLISIGCLAMFVTMVTILLY. Residues 522 to 572 lie on the Cytoplasmic side of the membrane; that stretch reads KKHKTYKPIGNCTRNVVKGKGLSVFLSHAKAPFSRGDREKDPLLQDKPWML. S544 is modified (phosphoserine). A Cell attachment site motif is present at residues 556-558; it reads RGD.

Belongs to the PMEL/NMB family.

It localises to the cell membrane. The protein resides in the melanosome membrane. Its subcellular location is the early endosome membrane. In terms of biological role, could be a melanogenic enzyme. This is Transmembrane glycoprotein NMB (Gpnmb) from Rattus norvegicus (Rat).